The following is a 714-amino-acid chain: Transcription activator of gluconeogenesis UREG_00958 (714 aa).

Residues Met-1 to Arg-71 are disordered. Residues Glu-38 to Asn-62 show a composition bias toward polar residues. Residues Cys-78–Cys-106 constitute a DNA-binding region (zn(2)-C6 fungal-type). Disordered regions lie at residues Ser-176–Gly-228, Gly-274–Pro-312, and Asn-539–Ser-567. The span at Phe-191 to Gly-228 shows a compositional bias: polar residues. Residues Gly-545 to Ser-555 show a composition bias toward low complexity.

The protein belongs to the ERT1/acuK family.

It is found in the nucleus. Functionally, transcription factor which regulates nonfermentable carbon utilization. Activator of gluconeogenetic genes. The sequence is that of Transcription activator of gluconeogenesis UREG_00958 from Uncinocarpus reesii (strain UAMH 1704).